A 297-amino-acid polypeptide reads, in one-letter code: Transmembrane protein 178A (297 aa).

Positions 1–25 (MEPRALVTALSLGLSLCSLGLLVTA) are cleaved as a signal peptide. Residues 26-179 (IFTDHWYETD…LLHLRRITAG (154 aa)) are Extracellular-facing. The segment covering 41-57 (ESCERSRAGADPPDQKN) has biased composition (basic and acidic residues). The disordered stretch occupies residues 41-86 (ESCERSRAGADPPDQKNRLMPLSHLPLRDSPPLGRRLLPGGPGRSD). A compositionally biased stretch (low complexity) spans 68-79 (RDSPPLGRRLLP). N-linked (GlcNAc...) asparagine glycosylation is present at Asn158. A helical transmembrane segment spans residues 180 to 200 (FLGMAVAVLLCGCIVATVSFF). Residues 201–208 (WEESLTQH) are Cytoplasmic-facing. Residues 209 to 229 (VAGLLFLMTGIFCTISLCTYA) traverse the membrane as a helical segment. At 230-257 (ASVSYDLNRVPKLIYSLPHDVEHGYSWS) the chain is on the extracellular side. Residues 258–278 (IFCAWCSLGFIVAAGGLCIAY) form a helical membrane-spanning segment. Over 279 to 297 (PFISRTKIAHLKSGRDSTV) the chain is Cytoplasmic.

Belongs to the TMEM178 family. In terms of assembly, interacts with STIM1.

It is found in the endoplasmic reticulum membrane. Functionally, acts as a negative regulator of osteoclast differentiation in basal and inflammatory conditions by regulating TNFSF11-induced Ca (2+) fluxes, thereby controlling the induction of NFATC1. The protein is Transmembrane protein 178A (Tmem178a) of Rattus norvegicus (Rat).